We begin with the raw amino-acid sequence, 547 residues long: Rho GTPase-activating protein 36 (547 aa).

The signal sequence occupies residues 1-40; it reads MGGCNPFLKAARTLCPRIMPPLLFLSAFIFLVNVLGGAPG. Positions 226–426 constitute a Rho-GAP domain; it reads MSLNPIAKQI…AMIDNWDILF (201 aa). Residues 493–547 are disordered; sequence FDEGSSEEPAVPPGTAHSHDDEEGAGNPPIPEQDRPLLRVPREKQAKTGIGYFFP. Positions 524–538 are enriched in basic and acidic residues; that stretch reads EQDRPLLRVPREKQA.

Functionally, GTPase activator for the Rho-type GTPases by converting them to an inactive GDP-bound state. This is Rho GTPase-activating protein 36 (ARHGAP36) from Ailuropoda melanoleuca (Giant panda).